A 259-amino-acid polypeptide reads, in one-letter code: Global transcriptional regulator CodY (259 aa).

The segment at 1–155 (MELLAKTRKL…SSTVVGMEIL (155 aa)) is GAF domain. The segment at residues 203–222 (ASKIADRVGITRSVIVNALR) is a DNA-binding region (H-T-H motif). At Ser215 the chain carries Phosphoserine.

It belongs to the CodY family.

The protein resides in the cytoplasm. DNA-binding global transcriptional regulator which is involved in the adaptive response to starvation and acts by directly or indirectly controlling the expression of numerous genes in response to nutrient availability. During rapid exponential growth, CodY is highly active and represses genes whose products allow adaptation to nutrient depletion. The polypeptide is Global transcriptional regulator CodY (Bacillus mycoides (strain KBAB4) (Bacillus weihenstephanensis)).